A 371-amino-acid polypeptide reads, in one-letter code: uncharacterized protein (371 aa).

This sequence belongs to the Gfo/Idh/MocA family.

This is an uncharacterized protein from Synechocystis sp. (strain ATCC 27184 / PCC 6803 / Kazusa).